The sequence spans 239 residues: Small ribosomal subunit protein uS3 (239 aa).

The KH type-2 domain maps to 38-106 (IRELIEERFK…KTFVNVVEIK (69 aa)).

Belongs to the universal ribosomal protein uS3 family. As to quaternary structure, part of the 30S ribosomal subunit. Forms a tight complex with proteins S10 and S14.

In terms of biological role, binds the lower part of the 30S subunit head. Binds mRNA in the 70S ribosome, positioning it for translation. In Elusimicrobium minutum (strain Pei191), this protein is Small ribosomal subunit protein uS3.